A 148-amino-acid polypeptide reads, in one-letter code: F-box protein At3g55900 (148 aa).

Residues 9–59 enclose the F-box domain; that stretch reads CRNLSELPQELLYKILGLLPTRNVVSTSLISHQRRSQFHWMERLKFRYPRL.

This is F-box protein At3g55900 from Arabidopsis thaliana (Mouse-ear cress).